Consider the following 463-residue polypeptide: Glycerol-3-phosphate acyltransferase, chloroplastic (463 aa).

The N-terminal 91 residues, 1–91 (MSIFFSPSSP…AATQPSAGSD (91 aa)), are a transit peptide targeting the chloroplast. Disordered regions lie at residues 18-37 (NANP…TPPL) and 65-95 (AETV…HGHS). Low complexity-rich tracts occupy residues 24–37 (SPSS…TPPL) and 74–90 (PSPS…SAGS). Positions 229–234 (HQTEAD) match the HXXXXD motif motif.

Belongs to the GPAT/DAPAT family.

It localises to the plastid. It is found in the chloroplast stroma. It catalyses the reaction sn-glycerol 3-phosphate + an acyl-CoA = a 1-acyl-sn-glycero-3-phosphate + CoA. Its pathway is phospholipid metabolism; CDP-diacylglycerol biosynthesis; CDP-diacylglycerol from sn-glycerol 3-phosphate: step 1/3. In terms of biological role, esterifies acyl-group from acyl-ACP to the sn-1 position of glycerol-3-phosphate. The enzyme from chilling-resistant plants discriminates against non-fluid palmitic acid and selects oleic acid whereas the enzyme from sensitive plants accepts both fatty acids. The sequence is that of Glycerol-3-phosphate acyltransferase, chloroplastic from Carthamus tinctorius (Safflower).